The sequence spans 654 residues: tRNA 5-methylaminomethyl-2-thiouridine biosynthesis bifunctional protein MnmC (654 aa).

The interval 1 to 236 (MPTLLQHAQI…KWEVMSGAYV (236 aa)) is tRNA (mnm(5)s(2)U34)-methyltransferase. Residues 262-654 (IGAGLAGSSS…FGLRRLIRGK (393 aa)) form an FAD-dependent cmnm(5)s(2)U34 oxidoreductase region.

This sequence in the N-terminal section; belongs to the methyltransferase superfamily. tRNA (mnm(5)s(2)U34)-methyltransferase family. In the C-terminal section; belongs to the DAO family. Requires FAD as cofactor.

The protein resides in the cytoplasm. The enzyme catalyses 5-aminomethyl-2-thiouridine(34) in tRNA + S-adenosyl-L-methionine = 5-methylaminomethyl-2-thiouridine(34) in tRNA + S-adenosyl-L-homocysteine + H(+). Its function is as follows. Catalyzes the last two steps in the biosynthesis of 5-methylaminomethyl-2-thiouridine (mnm(5)s(2)U) at the wobble position (U34) in tRNA. Catalyzes the FAD-dependent demodification of cmnm(5)s(2)U34 to nm(5)s(2)U34, followed by the transfer of a methyl group from S-adenosyl-L-methionine to nm(5)s(2)U34, to form mnm(5)s(2)U34. In Pseudomonas putida (strain ATCC 700007 / DSM 6899 / JCM 31910 / BCRC 17059 / LMG 24140 / F1), this protein is tRNA 5-methylaminomethyl-2-thiouridine biosynthesis bifunctional protein MnmC.